The chain runs to 94 residues: Small nuclear ribonucleoprotein E (94 aa).

A Sm domain is found at 14-94 (INCIFNFLQQ…DNITLITSAD (81 aa)).

It belongs to the snRNP Sm proteins family. As to quaternary structure, component of the Sm core complex, present in spliceosomal snRNP U1, U2, U4/U6 and U5. The core complex contains SMB1, SMD1, SMD2, SMD3, SME1, SMX3 and SMX2 (Sm proteins B, D1, D2, D3, E, F and G, respectively), and is probably a heptameric ring structure. SME1 specifically interacts with SMX2 and SMX3. Component of the U4/U6-U5 tri-snRNP complex composed of the U4, U6 and U5 snRNAs and at least PRP3, PRP4, PRP6, PRP8, PRP18, PRP31, PRP38, SNU13, SNU23, SNU66, SNU114, SPP381, SMB1, SMD1, SMD2, SMD3, SMX2, SMX3, LSM2, LSM3, LSM4, LSM5, LSM6, LSM7, LSM8, BRR2 and DIB1.

Its subcellular location is the cytoplasm. The protein resides in the nucleus. In terms of biological role, involved in pre-mRNA splicing. Binds and is required for the stability of snRNA U1, U2, U4 and U5 which contain a highly conserved structural motif called the Sm binding site. Involved in cap modification. The chain is Small nuclear ribonucleoprotein E (SME1) from Saccharomyces cerevisiae (strain ATCC 204508 / S288c) (Baker's yeast).